A 61-amino-acid polypeptide reads, in one-letter code: MNSMHLHAVRYIRVRLQRMRQMAAIQRKERGGPACSRQAPGDRIRFNRRTRCLESEHRAIS.

This is an uncharacterized protein from Treponema pallidum (strain Nichols).